A 336-amino-acid chain; its full sequence is Putative transcription factor avaE (336 aa).

The WRKY DNA-binding region spans 32-100 (TATRLNQTTF…VPLDQNESMP (69 aa)).

The protein localises to the nucleus. The protein operates within secondary metabolite biosynthesis. Its function is as follows. Putative transcription factor; part of the cluster that mediates the biosynthesis of a highly modified cyclo-arginine-tryptophan dipeptide (cRW). The sequence is that of Putative transcription factor avaE from Aspergillus versicolor.